We begin with the raw amino-acid sequence, 351 residues long: Putative aryl-alcohol dehydrogenase C977.14c (351 aa).

Position 113 is a phosphoserine (serine 113).

Belongs to the aldo/keto reductase family. Aldo/keto reductase 2 subfamily.

The protein localises to the cytoplasm. Its subcellular location is the nucleus. The sequence is that of Putative aryl-alcohol dehydrogenase C977.14c from Schizosaccharomyces pombe (strain 972 / ATCC 24843) (Fission yeast).